Consider the following 541-residue polypeptide: Arginine--tRNA ligase (541 aa).

A 'HIGH' region motif is present at residues 119–129 (ANPTGPLHIGH).

Belongs to the class-I aminoacyl-tRNA synthetase family. As to quaternary structure, monomer.

It is found in the cytoplasm. The catalysed reaction is tRNA(Arg) + L-arginine + ATP = L-arginyl-tRNA(Arg) + AMP + diphosphate. In Helicobacter pylori (strain HPAG1), this protein is Arginine--tRNA ligase.